A 330-amino-acid polypeptide reads, in one-letter code: N-acetyl-gamma-glutamyl-phosphate reductase (330 aa).

Residue cysteine 143 is part of the active site.

This sequence belongs to the NAGSA dehydrogenase family. Type 1 subfamily.

It localises to the cytoplasm. It carries out the reaction N-acetyl-L-glutamate 5-semialdehyde + phosphate + NADP(+) = N-acetyl-L-glutamyl 5-phosphate + NADPH + H(+). The protein operates within amino-acid biosynthesis; L-arginine biosynthesis; N(2)-acetyl-L-ornithine from L-glutamate: step 3/4. Functionally, catalyzes the NADPH-dependent reduction of N-acetyl-5-glutamyl phosphate to yield N-acetyl-L-glutamate 5-semialdehyde. This is N-acetyl-gamma-glutamyl-phosphate reductase from Methanocorpusculum labreanum (strain ATCC 43576 / DSM 4855 / Z).